The primary structure comprises 350 residues: Putative aminopeptidase MJ0555 (350 aa).

A divalent metal cation contacts are provided by His-62 and Asp-175. Glu-207 serves as the catalytic Proton acceptor. Positions 208, 230, and 321 each coordinate a divalent metal cation.

This sequence belongs to the peptidase M42 family. A divalent metal cation serves as cofactor.

This is Putative aminopeptidase MJ0555 from Methanocaldococcus jannaschii (strain ATCC 43067 / DSM 2661 / JAL-1 / JCM 10045 / NBRC 100440) (Methanococcus jannaschii).